Consider the following 464-residue polypeptide: Argininosuccinate lyase (464 aa).

It belongs to the lyase 1 family. Argininosuccinate lyase subfamily.

Its subcellular location is the cytoplasm. The enzyme catalyses 2-(N(omega)-L-arginino)succinate = fumarate + L-arginine. The protein operates within amino-acid biosynthesis; L-arginine biosynthesis; L-arginine from L-ornithine and carbamoyl phosphate: step 3/3. This Pseudomonas aeruginosa (strain LESB58) protein is Argininosuccinate lyase.